The primary structure comprises 315 residues: Tubulin beta-1 chain (315 aa).

GTP-binding residues include serine 6, glycine 10, threonine 11, glycine 12, asparagine 72, and asparagine 94. The tract at residues 295–315 (DATADEEEYYEDEEEEEAQGM) is disordered. Over residues 297–315 (TADEEEYYEDEEEEEAQGM) the composition is skewed to acidic residues.

The protein belongs to the tubulin family. In terms of assembly, dimer of alpha and beta chains. A typical microtubule is a hollow water-filled tube with an outer diameter of 25 nm and an inner diameter of 15 nM. Alpha-beta heterodimers associate head-to-tail to form protofilaments running lengthwise along the microtubule wall with the beta-tubulin subunit facing the microtubule plus end conferring a structural polarity. Microtubules usually have 13 protofilaments but different protofilament numbers can be found in some organisms and specialized cells. The cofactor is Mg(2+).

It localises to the cytoplasm. It is found in the cytoskeleton. Functionally, tubulin is the major constituent of microtubules, a cylinder consisting of laterally associated linear protofilaments composed of alpha- and beta-tubulin heterodimers. Microtubules grow by the addition of GTP-tubulin dimers to the microtubule end, where a stabilizing cap forms. Below the cap, tubulin dimers are in GDP-bound state, owing to GTPase activity of alpha-tubulin. The protein is Tubulin beta-1 chain (TUBB1) of Daucus carota (Wild carrot).